The chain runs to 907 residues: Protein translocase subunit SecA (907 aa).

Residues Q87, G105–T109, and D512 contribute to the ATP site. A disordered region spans residues Q834–I907. 2 stretches are compositionally biased toward basic and acidic residues: residues D836–R853 and E873–R888. Positions 892, 894, 903, and 904 each coordinate Zn(2+). Over residues K898 to I907 the composition is skewed to basic residues.

It belongs to the SecA family. In terms of assembly, monomer and homodimer. Part of the essential Sec protein translocation apparatus which comprises SecA, SecYEG and auxiliary proteins SecDF-YajC and YidC. Requires Zn(2+) as cofactor.

It localises to the cell inner membrane. The protein resides in the cytoplasm. The enzyme catalyses ATP + H2O + cellular proteinSide 1 = ADP + phosphate + cellular proteinSide 2.. Part of the Sec protein translocase complex. Interacts with the SecYEG preprotein conducting channel. Has a central role in coupling the hydrolysis of ATP to the transfer of proteins into and across the cell membrane, serving both as a receptor for the preprotein-SecB complex and as an ATP-driven molecular motor driving the stepwise translocation of polypeptide chains across the membrane. The chain is Protein translocase subunit SecA from Aliivibrio fischeri (strain ATCC 700601 / ES114) (Vibrio fischeri).